We begin with the raw amino-acid sequence, 842 residues long: Elongation factor 2 (842 aa).

A tr-type G domain is found at 17-346; sequence TNVRNMSVIA…MIVLHLPSPV (330 aa). Residues 26–33, 158–161, and 213–215 contribute to the GTP site; these read AHVDHGKS, NKVD, and SGL. A Diphthamide modification is found at His-699.

This sequence belongs to the TRAFAC class translation factor GTPase superfamily. Classic translation factor GTPase family. EF-G/EF-2 subfamily.

The protein localises to the cytoplasm. It catalyses the reaction GTP + H2O = GDP + phosphate + H(+). Its function is as follows. Catalyzes the GTP-dependent ribosomal translocation step during translation elongation. During this step, the ribosome changes from the pre-translocational (PRE) to the post-translocational (POST) state as the newly formed A-site-bound peptidyl-tRNA and P-site-bound deacylated tRNA move to the P and E sites, respectively. Catalyzes the coordinated movement of the two tRNA molecules, the mRNA and conformational changes in the ribosome. This is Elongation factor 2 (EFT2) from Candida albicans (strain SC5314 / ATCC MYA-2876) (Yeast).